The chain runs to 253 residues: Imidazole glycerol phosphate synthase subunit HisF (253 aa).

Residues aspartate 11 and aspartate 130 contribute to the active site.

Belongs to the HisA/HisF family. In terms of assembly, heterodimer of HisH and HisF.

The protein resides in the cytoplasm. The enzyme catalyses 5-[(5-phospho-1-deoxy-D-ribulos-1-ylimino)methylamino]-1-(5-phospho-beta-D-ribosyl)imidazole-4-carboxamide + L-glutamine = D-erythro-1-(imidazol-4-yl)glycerol 3-phosphate + 5-amino-1-(5-phospho-beta-D-ribosyl)imidazole-4-carboxamide + L-glutamate + H(+). It participates in amino-acid biosynthesis; L-histidine biosynthesis; L-histidine from 5-phospho-alpha-D-ribose 1-diphosphate: step 5/9. IGPS catalyzes the conversion of PRFAR and glutamine to IGP, AICAR and glutamate. The HisF subunit catalyzes the cyclization activity that produces IGP and AICAR from PRFAR using the ammonia provided by the HisH subunit. This chain is Imidazole glycerol phosphate synthase subunit HisF, found in Clostridium beijerinckii (strain ATCC 51743 / NCIMB 8052) (Clostridium acetobutylicum).